Here is a 570-residue protein sequence, read N- to C-terminus: Protein translocase subunit SecD (570 aa).

The segment covering 104–117 (GANATGTPSASETG) has biased composition (polar residues). The segment at 104-198 (GANATGTPSA…SASASGDDAT (95 aa)) is disordered. Residues 122–146 (KATDKATDKATDKATDGDKATDGDK) show a composition bias toward basic and acidic residues. Low complexity-rich tracts occupy residues 147-161 (ASGTPSDSASASATS) and 172-196 (ADPSPSATSSDGASPSPSASASGDD). The next 5 helical transmembrane spans lie at 370–390 (AGLIAGAIGLALVVLYLLFYY), 395–415 (FIAVCSLLVSAGLTYVIMALL), 419–439 (IGFALNLPAVCGAIVAIGITA), 474–494 (ILVSDFVSFLAAAVLFIVTVG), and 498–518 (GFAFTLGLTTLLDVVVVFLFT). Residues 540 to 570 (LDPKALGAKPPLRRTRRPSRPAAGPVDPKEA) are disordered.

Belongs to the SecD/SecF family. SecD subfamily. As to quaternary structure, forms a complex with SecF. Part of the essential Sec protein translocation apparatus which comprises SecA, SecYEG and auxiliary proteins SecDF. Other proteins may also be involved.

The protein localises to the cell membrane. Its function is as follows. Part of the Sec protein translocase complex. Interacts with the SecYEG preprotein conducting channel. SecDF uses the proton motive force (PMF) to complete protein translocation after the ATP-dependent function of SecA. The chain is Protein translocase subunit SecD from Streptomyces coelicolor (strain ATCC BAA-471 / A3(2) / M145).